The primary structure comprises 771 residues: Rho GTPase-activating protein 26 (771 aa).

The region spanning 7–262 is the BAR domain; that stretch reads EFSDCYLDSP…MKENPHEHLA (256 aa). A PH domain is found at 265–369; the sequence is PFTMEGYLYV…WMEAMDGREP (105 aa). A Rho-GAP domain is found at 383–568; it reads AQLDNIGFSI…IIIENYEEMF (186 aa). The disordered stretch occupies residues 575 to 712; that stretch reads PQTNSQLHLS…SSTSSDSSPV (138 aa). The span at 608-617 shows a compositional bias: basic and acidic residues; the sequence is HSSEKEEKRN. The span at 618 to 637 shows a compositional bias: low complexity; the sequence is SVNSSAESVSSSNANSSVNS. Polar residues-rich tracts occupy residues 638–650 and 662–671; these read TCTQ…NLNA and RPNSLLNPKN. Composition is skewed to low complexity over residues 673–683 and 691–712; these read SGLLPSSLNPS and PMVS…SSPV. Residues 713-771 enclose the SH3 domain; the sequence is SVPRKAKALYACKAEHDSELSFSAGTVFENVCPSQEPGWLEGTLNGKTGLIPENYVEFL.

It localises to the cell junction. Its subcellular location is the focal adhesion. The protein resides in the cytoplasm. The protein localises to the cytoskeleton. It is found in the endosome membrane. In terms of biological role, GTPase-activating protein for rhoa and cdc42. May be involved in the regulation of neosynthesized protein export through a Rab-endososomal dependent export route. This Xenopus laevis (African clawed frog) protein is Rho GTPase-activating protein 26 (arhgap26).